Reading from the N-terminus, the 172-residue chain is Translation initiation factor IF-3 (172 aa).

The protein belongs to the IF-3 family. Monomer.

Its subcellular location is the cytoplasm. IF-3 binds to the 30S ribosomal subunit and shifts the equilibrium between 70S ribosomes and their 50S and 30S subunits in favor of the free subunits, thus enhancing the availability of 30S subunits on which protein synthesis initiation begins. This Bartonella henselae (strain ATCC 49882 / DSM 28221 / CCUG 30454 / Houston 1) (Rochalimaea henselae) protein is Translation initiation factor IF-3.